A 338-amino-acid chain; its full sequence is MLISQRPTITEEFVDNARSRFVIEPLEPGFGYTLGNSLRRTLLSSIPGAAVTSVKIDGVLHEFTTISGVKEDVSDIILNIKGLVLSSDSDEPVVMQLVKEGPGVVTAGDIQPPAGVEIHNPDLHIATLNETAKIEIELIVERGRGYVPATVTATGGEIGRIPVDQIYSPVLKVSYKVEATRVEQRTDFDKLVIDVETKNSITARDALASAGKTLVELFGLARELNIAAEGIEIGPSPQETEYIAAYSMPIEDLDFSVRSYNCLKREDIHTVGELAERAESDLLDIRNFGQKSINEVKIKLAGLGLTLKDAPEDFDPSTLEGYDAETGGYIDVEAEDSE.

The tract at residues 1–225 (MLISQRPTIT…ELFGLARELN (225 aa)) is alpha N-terminal domain (alpha-NTD). Residues 240–338 (TEYIAAYSMP…YIDVEAEDSE (99 aa)) form an alpha C-terminal domain (alpha-CTD) region. The interval 319 to 338 (LEGYDAETGGYIDVEAEDSE) is disordered.

The protein belongs to the RNA polymerase alpha chain family. Homodimer. The RNAP catalytic core consists of 2 alpha, 1 beta, 1 beta' and 1 omega subunit. When a sigma factor is associated with the core the holoenzyme is formed, which can initiate transcription.

It carries out the reaction RNA(n) + a ribonucleoside 5'-triphosphate = RNA(n+1) + diphosphate. DNA-dependent RNA polymerase catalyzes the transcription of DNA into RNA using the four ribonucleoside triphosphates as substrates. The polypeptide is DNA-directed RNA polymerase subunit alpha (Corynebacterium glutamicum (strain R)).